Reading from the N-terminus, the 302-residue chain is Eukaryotic translation initiation factor 3 subunit F (302 aa).

The MPN domain maps to 23-165 (IVIEPAVLFS…IKTYVSSPVG (143 aa)). Ser-162 is modified (phosphoserine).

Belongs to the eIF-3 subunit F family. Component of the eukaryotic translation initiation factor 3 (eIF-3) complex. The eIF-3 complex appears to include tif32/eif3a, SPAC25G10.08/eif3b, tif33/eif3c, SPBC4C3.07/eif3f, tif35/eif3g and sum1/eif3i. This set of common subunits may also associate exclusively with either moe1/eif3d and int6/eif3e, or with SPAC821.05/eif3h and SPAC1751.03/eif3m. The eIF-3 complex may also include SPAC3A12.13c/eif3j.

It is found in the cytoplasm. Functionally, component of the eukaryotic translation initiation factor 3 (eIF-3) complex, which is involved in protein synthesis of a specialized repertoire of mRNAs and, together with other initiation factors, stimulates binding of mRNA and methionyl-tRNAi to the 40S ribosome. The eIF-3 complex specifically targets and initiates translation of a subset of mRNAs involved in cell proliferation. This is Eukaryotic translation initiation factor 3 subunit F from Schizosaccharomyces pombe (strain 972 / ATCC 24843) (Fission yeast).